Here is a 321-residue protein sequence, read N- to C-terminus: Lipoyl synthase (321 aa).

Positions 68, 73, 79, 94, 98, 101, and 308 each coordinate [4Fe-4S] cluster. Residues 80–297 (FNHGTATFMI…KVLADELGFT (218 aa)) enclose the Radical SAM core domain.

The protein belongs to the radical SAM superfamily. Lipoyl synthase family. The cofactor is [4Fe-4S] cluster.

The protein resides in the cytoplasm. The catalysed reaction is [[Fe-S] cluster scaffold protein carrying a second [4Fe-4S](2+) cluster] + N(6)-octanoyl-L-lysyl-[protein] + 2 oxidized [2Fe-2S]-[ferredoxin] + 2 S-adenosyl-L-methionine + 4 H(+) = [[Fe-S] cluster scaffold protein] + N(6)-[(R)-dihydrolipoyl]-L-lysyl-[protein] + 4 Fe(3+) + 2 hydrogen sulfide + 2 5'-deoxyadenosine + 2 L-methionine + 2 reduced [2Fe-2S]-[ferredoxin]. It participates in protein modification; protein lipoylation via endogenous pathway; protein N(6)-(lipoyl)lysine from octanoyl-[acyl-carrier-protein]: step 2/2. Its function is as follows. Catalyzes the radical-mediated insertion of two sulfur atoms into the C-6 and C-8 positions of the octanoyl moiety bound to the lipoyl domains of lipoate-dependent enzymes, thereby converting the octanoylated domains into lipoylated derivatives. This Shewanella sp. (strain ANA-3) protein is Lipoyl synthase.